A 523-amino-acid polypeptide reads, in one-letter code: MGVCFSAIRVTGASSSRRSSQTKSKAAPTPIDTKASTKRRTGSIPCGKRTDFGYSKDFHDHYTIGKLLGHGQFGYTYVAIHRPNGDRVAVKRLDKSKMVLPIAVEDVKREVQILIALSGHENVVQFHNAFEDDDYVYIVMELCEGGELLDRILSKKGNRYSEKDAAVVVRQMLKVAGECHLHGLVHRDMKPENFLFKSAQLDSPLKATDFGLSDFIKPGKRFHDIVGSAYYVAPEVLKRRSGPESDVWSIGVITYILLCGRRPFWDRTEDGIFKEVLRNKPDFSRKPWATISDSAKDFVKKLLVKDPRARLTAAQALSHAWVREGGNATDIPVDISVLNNLRQFVRYSRLKQFALRALASTLDEAEISDLRDQFDAIDVDKNGVISLEEMRQALAKDLPWKLKDSRVAEILEAIDSNTDGLVDFTEFVAAALHVHQLEEHDSEKWQLRSRAAFEKFDLDKDGYITPEELRMHTGLRGSIDPLLDEADIDRDGKISLHEFRRLLRTASISSQRAPSPAGHRNLR.

The N-myristoyl glycine moiety is linked to residue Gly2. A lipid anchor (S-palmitoyl cysteine) is attached at Cys4. The interval 15-43 (SSRRSSQTKSKAAPTPIDTKASTKRRTGS) is disordered. Residues 62–322 (YTIGKLLGHG…AAQALSHAWV (261 aa)) form the Protein kinase domain. Residues 68 to 76 (LGHGQFGYT) and Lys91 each bind ATP. Asp188 (proton acceptor) is an active-site residue. Phosphoserine is present on residues Ser228 and Ser318. The segment at 328 to 358 (ATDIPVDISVLNNLRQFVRYSRLKQFALRAL) is autoinhibitory domain. 4 consecutive EF-hand domains span residues 365 to 400 (AEISDLRDQFDAIDVDKNGVISLEEMRQALAKDLPW), 402 to 437 (LKDSRVAEILEAIDSNTDGLVDFTEFVAAALHVHQL), 444 to 479 (KWQLRSRAAFEKFDLDKDGYITPEELRMHTGLRGSI), and 482 to 509 (LLDEADIDRDGKISLHEFRRLLRTASIS). Positions 378, 380, 382, 389, 415, 417, 419, 426, 457, 459, 461, 463, 468, 487, 489, 491, and 493 each coordinate Ca(2+). At Ser495 the chain carries Phosphoserine. Glu498 is a binding site for Ca(2+). Residue Ser515 is modified to Phosphoserine.

Belongs to the protein kinase superfamily. Ser/Thr protein kinase family. CDPK subfamily. Interacts with BIK1. As to expression, expressed in vascular and meristematic tissues throughout plant development.

It localises to the cell membrane. It catalyses the reaction L-seryl-[protein] + ATP = O-phospho-L-seryl-[protein] + ADP + H(+). The catalysed reaction is L-threonyl-[protein] + ATP = O-phospho-L-threonyl-[protein] + ADP + H(+). With respect to regulation, activated by calcium. Autophosphorylation plays an important role in the regulation of the kinase activity. Functionally, may play a role in signal transduction pathways that involve calcium as a second messenger. Acts as a developmentally controlled regulator for coordinated stem elongation and vascular development. Acts as a key component which contributes to the developmental switch that establishes the transition from vegetative to reproductive growth. Involved in pathogen-associated molecular pattern (PAMP)-triggered immunity (PTI) signaling. Interacts with and phosphorylates the kinase BIK1, a central rate-limiting kinase in PTI signaling. Facilitates BIK1 turnover and negatively regulates BIK1-mediated immune responses triggered by several PAMPs. Its kinase activity is necessary and sufficient for its function in PTI signaling. In Arabidopsis thaliana (Mouse-ear cress), this protein is Calcium-dependent protein kinase 28.